The chain runs to 264 residues: Thymidylate synthase (264 aa).

R21 is a binding site for dUMP. H51 is a (6R)-5,10-methylene-5,6,7,8-tetrahydrofolate binding site. Position 126–127 (126–127 (RR)) interacts with dUMP. C146 serves as the catalytic Nucleophile. DUMP is bound by residues 166-169 (RSCD), N177, and 207-209 (HLY). A (6R)-5,10-methylene-5,6,7,8-tetrahydrofolate-binding site is contributed by D169. Position 263 (A263) interacts with (6R)-5,10-methylene-5,6,7,8-tetrahydrofolate.

Belongs to the thymidylate synthase family. Bacterial-type ThyA subfamily. In terms of assembly, homodimer.

The protein resides in the cytoplasm. It catalyses the reaction dUMP + (6R)-5,10-methylene-5,6,7,8-tetrahydrofolate = 7,8-dihydrofolate + dTMP. It participates in pyrimidine metabolism; dTTP biosynthesis. Functionally, catalyzes the reductive methylation of 2'-deoxyuridine-5'-monophosphate (dUMP) to 2'-deoxythymidine-5'-monophosphate (dTMP) while utilizing 5,10-methylenetetrahydrofolate (mTHF) as the methyl donor and reductant in the reaction, yielding dihydrofolate (DHF) as a by-product. This enzymatic reaction provides an intracellular de novo source of dTMP, an essential precursor for DNA biosynthesis. In Salmonella typhi, this protein is Thymidylate synthase.